The sequence spans 127 residues: Small ribosomal subunit protein uS11 (127 aa).

The protein belongs to the universal ribosomal protein uS11 family. Part of the 30S ribosomal subunit. Interacts with proteins S7 and S18. Binds to IF-3.

Its function is as follows. Located on the platform of the 30S subunit, it bridges several disparate RNA helices of the 16S rRNA. Forms part of the Shine-Dalgarno cleft in the 70S ribosome. The polypeptide is Small ribosomal subunit protein uS11 (Chlorobaculum parvum (strain DSM 263 / NCIMB 8327) (Chlorobium vibrioforme subsp. thiosulfatophilum)).